Reading from the N-terminus, the 364-residue chain is DNA replication and repair protein RecF (364 aa).

Gly30–Thr37 serves as a coordination point for ATP.

This sequence belongs to the RecF family.

It localises to the cytoplasm. The RecF protein is involved in DNA metabolism; it is required for DNA replication and normal SOS inducibility. RecF binds preferentially to single-stranded, linear DNA. It also seems to bind ATP. The sequence is that of DNA replication and repair protein RecF from Clostridium kluyveri (strain ATCC 8527 / DSM 555 / NBRC 12016 / NCIMB 10680 / K1).